We begin with the raw amino-acid sequence, 523 residues long: MMLRGNLKQVRIEKNPARLRALESAAGESEPVAAAAMALTLAGEQAPPPAPSEEHPDEELGFTIDIKSFLKPGEKTYTQRCRLFVGNLPTDITEEDFKRLFERYGEPSEVFINRDRGFGFIRLESRTLAEIAKAELDGTILKSRPLRIRFATHGAALTVKNLSPVVSNELLEQAFSQFGPVEKAVVVVDDRGRATGKGFVEFAAKPPARKALERCGDGAFLLTTTPRPVIVEPMEQFDDEDGLPEKLMQKTQQYHKEREQPPRFAQPGTFEFEYASRWKALDEMEKQQREQVDRNIREAKEKLEAEMEAARHEHQLMLMRQDLMRRQEELRRLEELRNQELQKRKQIQLRHEEEHRRREEEMIRHREQEELRRQQEGGFKPNYMENREQEMRMGDMGPRGAINMGDAFSPAPAGTQGPPPMMGMNMNNRGTIPGPPMGPGPAMGPEGAANMGTPMIPDNGAVHNDRFPQGPPSQMGSPMGNRTGSETPQAPMSGVGPVSGGPGGFGRGSQGGNFEGPNKRRRY.

At methionine 1 the chain carries N-acetylmethionine. RRM domains lie at 81-153 and 155-236; these read CRLF…FATH and AALT…PMEQ. Residues 124–357 are sufficient for paraspeckles localization; that stretch reads ESRTLAEIAK…QLRHEEEHRR (234 aa). The segment at 230–357 is sufficient for perinucleolar caps localization and interaction with NONO; it reads IVEPMEQFDD…QLRHEEEHRR (128 aa). The stretch at 282-376 forms a coiled coil; that stretch reads DEMEKQQREQ…EQEELRRQQE (95 aa). Phosphoserine occurs at positions 409, 473, and 477. The segment at 460–523 is disordered; it reads GAVHNDRFPQ…FEGPNKRRRY (64 aa). Residues 472-490 show a composition bias toward polar residues; the sequence is PSQMGSPMGNRTGSETPQA. Residues 497–514 show a composition bias toward gly residues; the sequence is PVSGGPGGFGRGSQGGNF. The residue at position 507 (arginine 507) is an Omega-N-methylarginine. A Phosphoserine modification is found at serine 509.

It belongs to the PSPC family. In terms of assembly, forms heterodimers with NONO; this involves formation of a coiled coil domain by helices from both proteins. Found in a RNP complex with CAT2 transcribed nuclear RNA (CTN-RNA). Interaction with NONO is required for its targeting to paraspeckles and perinucleolar caps. Interacts with SFPQ. Part of the HDP-RNP complex composed of at least HEXIM1, PRKDC, XRCC5, XRCC6, paraspeckle proteins (SFPQ, NONO, PSPC1, RBM14, and MATR3) and NEAT1 RNA. Interacts with ALKBH5 (when acetylated); interaction with acetylated ALKBH5 facilitates recognition of N(6)-methyladenosine (m6A) RNAs. In terms of tissue distribution, isoform 1 is strongly expressed in testis (leptoten spermatocytes, round spematids and Sertoli cells) and moderately in cerebrum, cerebellum, lung, spleen and ovary (at protein level). Isoform 2 is strongly expressed in kidney and moderately in salivary gland (at protein level).

The protein resides in the nucleus speckle. It is found in the nucleus. It localises to the nucleolus. Its subcellular location is the nucleus matrix. The protein localises to the cytoplasm. Functionally, RNA-binding protein required for the formation of nuclear paraspeckles. Binds to poly(A), poly(G) and poly(U) RNA homopolymers. Regulates, cooperatively with NONO and SFPQ, androgen receptor-mediated gene transcription activity in Sertoli cell line. Regulates the circadian clock by repressing the transcriptional activator activity of the CLOCK-BMAL1 heterodimer. Plays a role in the regulation of DNA virus-mediated innate immune response by assembling into the HDP-RNP complex, a complex that serves as a platform for IRF3 phosphorylation and subsequent innate immune response activation through the cGAS-STING pathway. In Mus musculus (Mouse), this protein is Paraspeckle component 1 (Pspc1).